Here is a 93-residue protein sequence, read N- to C-terminus: Pyrimidine/purine nucleoside phosphorylase (93 aa).

It belongs to the nucleoside phosphorylase PpnP family.

It carries out the reaction a purine D-ribonucleoside + phosphate = a purine nucleobase + alpha-D-ribose 1-phosphate. The catalysed reaction is adenosine + phosphate = alpha-D-ribose 1-phosphate + adenine. The enzyme catalyses cytidine + phosphate = cytosine + alpha-D-ribose 1-phosphate. It catalyses the reaction guanosine + phosphate = alpha-D-ribose 1-phosphate + guanine. It carries out the reaction inosine + phosphate = alpha-D-ribose 1-phosphate + hypoxanthine. The catalysed reaction is thymidine + phosphate = 2-deoxy-alpha-D-ribose 1-phosphate + thymine. The enzyme catalyses uridine + phosphate = alpha-D-ribose 1-phosphate + uracil. It catalyses the reaction xanthosine + phosphate = alpha-D-ribose 1-phosphate + xanthine. Catalyzes the phosphorolysis of diverse nucleosides, yielding D-ribose 1-phosphate and the respective free bases. Can use uridine, adenosine, guanosine, cytidine, thymidine, inosine and xanthosine as substrates. Also catalyzes the reverse reactions. The sequence is that of Pyrimidine/purine nucleoside phosphorylase from Pseudomonas savastanoi pv. phaseolicola (strain 1448A / Race 6) (Pseudomonas syringae pv. phaseolicola (strain 1448A / Race 6)).